The sequence spans 420 residues: LanC-like protein 3 homolog (420 aa).

The protein belongs to the LanC-like protein family.

The polypeptide is LanC-like protein 3 homolog (Drosophila pseudoobscura pseudoobscura (Fruit fly)).